The chain runs to 432 residues: Ribulose bisphosphate carboxylase-like protein 2 (432 aa).

Mg(2+) is bound by residues Lys-198, Asp-200, and Glu-201. Lys-198 bears the N6-carboxylysine mark.

This sequence belongs to the RuBisCO large chain family. Type IV subfamily. Homodimer. The cofactor is Mg(2+).

In terms of biological role, may be involved in sulfur metabolism and oxidative stress response. Does not show RuBisCO activity. The sequence is that of Ribulose bisphosphate carboxylase-like protein 2 (rlp2) from Rhodopseudomonas palustris (strain ATCC BAA-98 / CGA009).